Here is a 163-residue protein sequence, read N- to C-terminus: Cyanate hydratase (163 aa).

Catalysis depends on residues Arg103, Glu106, and Ser129.

It belongs to the cyanase family.

It carries out the reaction cyanate + hydrogencarbonate + 3 H(+) = NH4(+) + 2 CO2. Functionally, catalyzes the reaction of cyanate with bicarbonate to produce ammonia and carbon dioxide. This is Cyanate hydratase from Talaromyces marneffei (strain ATCC 18224 / CBS 334.59 / QM 7333) (Penicillium marneffei).